The primary structure comprises 449 residues: Sensor protein QseC (449 aa).

The Cytoplasmic portion of the chain corresponds to 1 to 12; it reads MKLTQRLSLRVR. Residues 13 to 33 form a helical membrane-spanning segment; it reads LTLIFLILVSITWAISSFVAW. Residues 34–161 are Periplasmic-facing; the sequence is RKTTDNVDEL…REDMALAIVA (128 aa). A helical membrane pass occupies residues 162 to 182; that stretch reads AQLTPWLIALPFMLLILLLLL. Positions 183 to 235 constitute an HAMP domain; the sequence is HRELRPLKKLAQALRFRSPESETPLDAKGVPSEVRPLVEALNQLFSRIHSMMV. At 183 to 449 the chain is on the cytoplasmic side; that stretch reads HRELRPLKKL…EGGFEAVVSW (267 aa). In terms of domain architecture, Histidine kinase spans 243–449; the sequence is DAAHELRSPL…EGGFEAVVSW (207 aa). At histidine 246 the chain carries Phosphohistidine; by autocatalysis.

It is found in the cell inner membrane. It catalyses the reaction ATP + protein L-histidine = ADP + protein N-phospho-L-histidine.. Member of a two-component regulatory system QseB/QseC. Activates the flagella regulon by activating transcription of FlhDC. May activate QseB by phosphorylation. This is Sensor protein QseC (qseC) from Salmonella typhimurium (strain LT2 / SGSC1412 / ATCC 700720).